The sequence spans 206 residues: Uridine kinase (206 aa).

11–18 (GGSASGKT) is a binding site for ATP.

It belongs to the uridine kinase family.

The protein resides in the cytoplasm. The enzyme catalyses uridine + ATP = UMP + ADP + H(+). It carries out the reaction cytidine + ATP = CMP + ADP + H(+). Its pathway is pyrimidine metabolism; CTP biosynthesis via salvage pathway; CTP from cytidine: step 1/3. The protein operates within pyrimidine metabolism; UMP biosynthesis via salvage pathway; UMP from uridine: step 1/1. This chain is Uridine kinase, found in Lactococcus lactis subsp. lactis (strain IL1403) (Streptococcus lactis).